Consider the following 423-residue polypeptide: COUP transcription factor 1 (423 aa).

The interval 1–81 (MAMVVSSWRD…QGPPGSGQSQ (81 aa)) is disordered. Over residues 39–67 (EQQQQAGSGAPHTPQTPGQPGAPATPGTA) the composition is skewed to low complexity. The nuclear receptor DNA-binding region spans 83-158 (HIECVVCGDK…VGMRREAVQR (76 aa)). NR C4-type zinc fingers lie at residues 86–106 (CVVCGDKSSGKHYGQFTCEGC) and 122–146 (CRANRNCPIDQHHRNQCQYCRLKKC). Residues 184 to 410 (YLSGYISLLL…TLIRDMLLSG (227 aa)) enclose the NR LBD domain.

Belongs to the nuclear hormone receptor family. NR2 subfamily. As to quaternary structure, binds DNA as dimer; homodimer and probable heterodimer with NR2F6. Interacts with GTF2B; this interaction is direct. Interacts with COPS2.

The protein resides in the nucleus. Functionally, coup (chicken ovalbumin upstream promoter) transcription factor binds to the ovalbumin promoter and, in conjunction with another protein (S300-II) stimulates initiation of transcription. Binds to both direct repeats and palindromes of the 5'-AGGTCA-3' motif. Represses transcriptional activity of LHCG. This Homo sapiens (Human) protein is COUP transcription factor 1 (NR2F1).